The sequence spans 244 residues: Small ribosomal subunit protein eS4 (244 aa).

Residues 43-106 (LPLLLVVRDV…DENYLVLFDE (64 aa)) enclose the S4 RNA-binding domain.

It belongs to the eukaryotic ribosomal protein eS4 family.

The polypeptide is Small ribosomal subunit protein eS4 (Methanococcus maripaludis (strain C5 / ATCC BAA-1333)).